We begin with the raw amino-acid sequence, 337 residues long: Tert-butanol monooxygenase / tert-amyl alcohol desaturase reductase subunit (337 aa).

Residues 9–114 (KYPKTALNLR…GHPRNNFPLI (106 aa)) form the FAD-binding FR-type domain. The 2Fe-2S ferredoxin-type domain occupies 254–337 (FQIKIASTGT…SKGATLVLDL (84 aa)). Positions 288, 293, 296, and 324 each coordinate [2Fe-2S] cluster.

This sequence belongs to the PDR/VanB family. As to quaternary structure, this two-component enzyme is composed of an oxygenase (MdpJ) and a reductase (MdpK). The cofactor is [2Fe-2S] cluster.

In terms of biological role, reductase component of a two-component system involved in the degradation of tertiary alcohols such as tert-butyl alcohol (TBA) and tert-amyl alcohol (TAA). MdpK probably provides electrons via its [2Fe-2S] iron-sulfur cluster to the MdpJ oxygenase subunit. The sequence is that of Tert-butanol monooxygenase / tert-amyl alcohol desaturase reductase subunit from Aquincola tertiaricarbonis.